A 147-amino-acid chain; its full sequence is Spermidine export protein MdtJ (147 aa).

Helical transmembrane passes span 1-21, 31-51, 54-74, and 81-101; these read MIYW…TLSM, TGHI…SLAV, VALG…ITIF, and ETLS…ILLV. A disordered region spans residues 105–147; that stretch reads TRKPKQPNCHRGNRPPSVQELKTQTTGHHKGVAVESGEHHAAA.

This sequence belongs to the drug/metabolite transporter (DMT) superfamily. Small multidrug resistance (SMR) (TC 2.A.7.1) family. MdtJ subfamily. In terms of assembly, forms a complex with MdtI.

It is found in the cell inner membrane. Catalyzes the excretion of spermidine. The polypeptide is Spermidine export protein MdtJ (Yersinia pestis bv. Antiqua (strain Antiqua)).